We begin with the raw amino-acid sequence, 734 residues long: MALRFPRFSQGLAQDPTTRRIWFGIATAHDFESHDDITEERLYQNIFASHFGQLAIIFLWTSGNLFHVAWQGNFESWVQDPLHVRPIAHAIWDPHFGQPAVEAFTRGGALGPVNIAYSGVYQWWYTIGLRTNEDLYTGALFLLLISAISLIAGWLHLQPKWKPSVSWFKNAESRLNHHLSGLFGVSSLAWTGHLVHVAIPASRGEYVRWNNFLDVLPHPQGLGPLFTGQWNLYAQNPDSGSHLFGTSQGAGTAILTLLGGFHPQTQSLWLTDMAHHHLAIAFLFLIAGHMYRTNFGIGHSMKDLLDAHIPPGGRLGRGHKGLYDTINNSLHFQLGLALASLGVITSLVAQHMYSLPAYAFIAQDFTTQAALYTHHQYIAGFIMTGAFAHGAIFFIRDYNPEQNEDNVLARMLEHKEAIISHLSWASLFLGFHTLGLYVHNDVMLAFGTPEKQILIEPIFAQWIQSAHGKTSYGFDILLSSTNGPAFNAGRSIWLPGWLNAINENSNSLFLTIGPGDFLVHHAIALGLHTTTLILVKGALDARGSKLMPDKKDFGYSFPCDGPGRGGTCDISAWDAFYLAVFWMLNTIGWVTFYWHWKHITLWQGNVSQFNESSTYLMGWLRDYLWLNSSQLINGYNPFGMNSLSVWAWMFLFGHLVWATGFMFLISWRGYWQELIETLAWAHERTPLANLIRWRDKPVALSIVQARLVGLAHFSVGYIFTYAAFLIASTSGKFG.

Helical transmembrane passes span 46 to 69 (IFAS…FHVA), 135 to 158 (LYTG…LHLQ), 175 to 199 (LNHH…HVAI), 273 to 291 (MAHH…GHMY), 330 to 353 (LHFQ…QHMY), 369 to 395 (AALY…IFFI), 417 to 439 (AIIS…LYVH), and 517 to 535 (FLVH…LILV). Positions 559 and 568 each coordinate [4Fe-4S] cluster. 2 consecutive transmembrane segments (helical) span residues 575-596 (AFYL…YWHW) and 643-665 (LSVW…MFLI). Histidine 654, methionine 662, and tyrosine 670 together coordinate chlorophyll a. Tryptophan 671 is a binding site for phylloquinone. Residues 707 to 727 (LVGLAHFSVGYIFTYAAFLIA) form a helical membrane-spanning segment.

This sequence belongs to the PsaA/PsaB family. In terms of assembly, the PsaA/B heterodimer binds the P700 chlorophyll special pair and subsequent electron acceptors. PSI consists of a core antenna complex that captures photons, and an electron transfer chain that converts photonic excitation into a charge separation. The eukaryotic PSI reaction center is composed of at least 11 subunits. It depends on P700 is a chlorophyll a/chlorophyll a' dimer, A0 is one or more chlorophyll a, A1 is one or both phylloquinones and FX is a shared 4Fe-4S iron-sulfur center. as a cofactor.

It is found in the plastid. It localises to the chloroplast thylakoid membrane. The enzyme catalyses reduced [plastocyanin] + hnu + oxidized [2Fe-2S]-[ferredoxin] = oxidized [plastocyanin] + reduced [2Fe-2S]-[ferredoxin]. Its function is as follows. PsaA and PsaB bind P700, the primary electron donor of photosystem I (PSI), as well as the electron acceptors A0, A1 and FX. PSI is a plastocyanin-ferredoxin oxidoreductase, converting photonic excitation into a charge separation, which transfers an electron from the donor P700 chlorophyll pair to the spectroscopically characterized acceptors A0, A1, FX, FA and FB in turn. Oxidized P700 is reduced on the lumenal side of the thylakoid membrane by plastocyanin. The polypeptide is Photosystem I P700 chlorophyll a apoprotein A2 (Lactuca sativa (Garden lettuce)).